We begin with the raw amino-acid sequence, 209 residues long: Uracil phosphoribosyltransferase (209 aa).

Residues Arg-79, Arg-104, and Asp-131–Thr-139 each bind 5-phospho-alpha-D-ribose 1-diphosphate. Uracil is bound by residues Ile-194 and Gly-199 to Ala-201. Asp-200 contacts 5-phospho-alpha-D-ribose 1-diphosphate.

This sequence belongs to the UPRTase family. Requires Mg(2+) as cofactor.

It catalyses the reaction UMP + diphosphate = 5-phospho-alpha-D-ribose 1-diphosphate + uracil. It participates in pyrimidine metabolism; UMP biosynthesis via salvage pathway; UMP from uracil: step 1/1. Its activity is regulated as follows. Allosterically activated by GTP. In terms of biological role, catalyzes the conversion of uracil and 5-phospho-alpha-D-ribose 1-diphosphate (PRPP) to UMP and diphosphate. This Caulobacter sp. (strain K31) protein is Uracil phosphoribosyltransferase.